We begin with the raw amino-acid sequence, 161 residues long: Allophycocyanin beta chain (161 aa).

Asn-71 carries the post-translational modification N4-methylasparagine. Cys-81 serves as a coordination point for (2R,3E)-phycocyanobilin.

Belongs to the phycobiliprotein family. Heterodimer of an alpha and a beta chain. Post-translationally, contains one covalently linked phycocyanobilin chromophore.

It is found in the cellular thylakoid membrane. Its function is as follows. Light-harvesting photosynthetic bile pigment-protein from the phycobiliprotein complex. Allophycocyanin has a maximum absorption at approximately 650 nanometers. This Arthrospira platensis (Spirulina platensis) protein is Allophycocyanin beta chain (apcB).